A 434-amino-acid polypeptide reads, in one-letter code: Adenylosuccinate synthetase (434 aa).

GTP is bound by residues 22–28 and 50–52; these read GDEGKGK and GHT. D23 serves as the catalytic Proton acceptor. Mg(2+) contacts are provided by D23 and G50. Residues 23–26, 48–51, T139, R153, Q234, T249, and R313 each bind IMP; these read DEGK and NAGH. H51 serves as the catalytic Proton donor. Residue 309 to 315 participates in substrate binding; the sequence is ATTGRKR. Residues R315, 341 to 343, and 423 to 425 contribute to the GTP site; these read KLD and SVG.

This sequence belongs to the adenylosuccinate synthetase family. Homodimer. Requires Mg(2+) as cofactor.

It localises to the cytoplasm. The enzyme catalyses IMP + L-aspartate + GTP = N(6)-(1,2-dicarboxyethyl)-AMP + GDP + phosphate + 2 H(+). It participates in purine metabolism; AMP biosynthesis via de novo pathway; AMP from IMP: step 1/2. In terms of biological role, plays an important role in the de novo pathway of purine nucleotide biosynthesis. Catalyzes the first committed step in the biosynthesis of AMP from IMP. The sequence is that of Adenylosuccinate synthetase from Chlorobium chlorochromatii (strain CaD3).